The sequence spans 305 residues: Glycine cleavage system transcriptional activator (305 aa).

The HTH lysR-type domain occupies 6-63; it reads PPLNALRVFDAAARHLSFTRAAEELFVTQAAVSHQIKSLEDFLGLKLFRRRNRSLLLT. Positions 23–42 form a DNA-binding region, H-T-H motif; that stretch reads FTRAAEELFVTQAAVSHQIK.

This sequence belongs to the LysR transcriptional regulatory family.

It is found in the cytoplasm. Its function is as follows. Regulatory protein for the glycine cleavage system operon (gcv). Mediates activation of gcv by glycine and repression by purines. GcvA is negatively autoregulated. Binds to three sites upstream of the gcv promoter. The chain is Glycine cleavage system transcriptional activator (gcvA) from Escherichia coli O157:H7.